The primary structure comprises 117 residues: Large ribosomal subunit protein bL20 (117 aa).

It belongs to the bacterial ribosomal protein bL20 family.

In terms of biological role, binds directly to 23S ribosomal RNA and is necessary for the in vitro assembly process of the 50S ribosomal subunit. It is not involved in the protein synthesizing functions of that subunit. The polypeptide is Large ribosomal subunit protein bL20 (Rickettsia canadensis (strain McKiel)).